The primary structure comprises 464 residues: Rhodopsin (464 aa).

At 1–33 the chain is on the extracellular side; the sequence is MGRDIPDNETWWYNPTMEVHPHWKQFNQVPDAV. N-linked (GlcNAc...) asparagine glycosylation occurs at asparagine 8. A helical transmembrane segment spans residues 34 to 58; sequence YYSLGIFIGICGIIGCTGNGIVIYL. Topologically, residues 59–70 are cytoplasmic; it reads FTKTKSLQTPAN. The helical transmembrane segment at 71-97 threads the bilayer; that stretch reads MFIINLAFSDFTFSLVNGFPLMTISCF. At 98–109 the chain is on the extracellular side; sequence IKKWVFGMAACK. Cysteine 108 and cysteine 186 are joined by a disulfide. Residues 110 to 131 form a helical membrane-spanning segment; the sequence is VYGFIGGIFGLMSIMTMSMISI. The short motif at 132 to 134 is the 'Ionic lock' involved in activated form stabilization element; it reads DRY. Residues 132-151 are Cytoplasmic-facing; sequence DRYNVIGRPMAASKKMSHRR. A helical membrane pass occupies residues 152-172; that stretch reads AFLMIIFVWMWSTLWSIGPIF. Over 173–199 the chain is Extracellular; sequence GWGAYVLEGVLCNCSFDYITRDSATRS. A helical membrane pass occupies residues 200-224; that stretch reads NIVCMYIFAFCFPILIIFFCYFNIV. Over 225–261 the chain is Cytoplasmic; it reads MAVSNHEKEMAAMAKRLNAKELRKAQAGASAEMKLAK. A helical transmembrane segment spans residues 262 to 283; that stretch reads ISIVIVTQFLLSWSPYAVVALL. Residues 284 to 293 lie on the Extracellular side of the membrane; the sequence is AQFGPIEWVT. A helical membrane pass occupies residues 294 to 315; sequence PYAAQLPVMFAKASAIHNPLIY. The residue at position 305 (lysine 305) is an N6-(retinylidene)lysine. The Cytoplasmic segment spans residues 316-464; it reads SVSHPKFREA…QGVDNQAYQA (149 aa). S-palmitoyl cysteine attachment occurs at residues cysteine 336 and cysteine 337. The interval 344 to 464 is disordered; sequence VEDDKDAETE…QGVDNQAYQA (121 aa). Positions 367–401 are enriched in low complexity; that stretch reads AAQMKEMMAMMQKMQQQQAAYPPQGAYPPQGGYPP. 2 stretches are compositionally biased toward pro residues: residues 416 to 425 and 434 to 452; these read QGYPPPPQGY and QGYPPPQGAPPQGAPPQAA.

This sequence belongs to the G-protein coupled receptor 1 family. Opsin subfamily. In terms of processing, contains one covalently linked retinal chromophore. Upon light absorption, the covalently bound 11-cis-retinal is converted to all-trans-retinal. After hydrolysis of the Schiff base and release of the covalently bound all-trans-retinal, active rhodopsin is regenerated by binding of a fresh molecule of 11-cis-retinal.

It is found in the cell projection. The protein resides in the rhabdomere membrane. In terms of biological role, photoreceptor required for image-forming vision at low light intensity. Light-induced isomerization of 11-cis to all-trans retinal triggers a conformational change that activates signaling via G-proteins. Signaling mediates the activation of phospholipase C. Subsequent receptor phosphorylation mediates displacement of the bound G-protein alpha subunit by arrestin and terminates signaling. This is Rhodopsin (RHO) from Sepia officinalis (Common cuttlefish).